We begin with the raw amino-acid sequence, 129 residues long: Fluoride-specific ion channel FluC (129 aa).

The next 4 helical transmembrane spans lie at 4 to 24 (LFVA…SGLI), 32 to 52 (FPWG…AFAT), 69 to 89 (FFMV…LQTL), and 105 to 125 (VLSV…AVLI). Na(+)-binding residues include G76 and T79.

Belongs to the fluoride channel Fluc/FEX (TC 1.A.43) family.

Its subcellular location is the cell inner membrane. It carries out the reaction fluoride(in) = fluoride(out). Its activity is regulated as follows. Na(+) is not transported, but it plays an essential structural role and its presence is essential for fluoride channel function. Functionally, fluoride-specific ion channel. Important for reducing fluoride concentration in the cell, thus reducing its toxicity. The protein is Fluoride-specific ion channel FluC of Rhodospirillum rubrum (strain ATCC 11170 / ATH 1.1.1 / DSM 467 / LMG 4362 / NCIMB 8255 / S1).